We begin with the raw amino-acid sequence, 104 residues long: Large ribosomal subunit protein uL24 (104 aa).

It belongs to the universal ribosomal protein uL24 family. In terms of assembly, part of the 50S ribosomal subunit.

In terms of biological role, one of two assembly initiator proteins, it binds directly to the 5'-end of the 23S rRNA, where it nucleates assembly of the 50S subunit. Its function is as follows. One of the proteins that surrounds the polypeptide exit tunnel on the outside of the subunit. The polypeptide is Large ribosomal subunit protein uL24 (Pseudomonas fluorescens (strain SBW25)).